The chain runs to 98 residues: Serine rich endogenous peptide 10 (98 aa).

An N-terminal signal peptide occupies residues Met-1–Ser-29. Positions Asn-50–Pro-98 are disordered. Over residues Ala-52–Asp-61 the composition is skewed to polar residues. 2 short sequence motifs (SCOOP motif) span residues Ala-52–Ser-66 and Asp-80–Arg-94. Short sequence motifs (sxS motif essential for MIK2 binding) lie at residues Ser-58–Ser-60 and Ser-86–Ser-88. The segment covering Ser-86 to Pro-98 has biased composition (gly residues).

This sequence belongs to the serine rich endogenous peptide (SCOOP) phytocytokine family. Interacts with MIK2 (via extracellular leucine-rich repeat domain); this interaction triggers the formation of complex between MIK2 and the BAK1/SERK3 and SERK4 coreceptors, and subsequent BAK1 activation by phosphorylation. Mostly expressed in leaves and seedlings shoots, to a lower extent, in roots, but barely in flowers.

The protein resides in the cell membrane. It localises to the secreted. It is found in the extracellular space. Its subcellular location is the apoplast. In terms of biological role, brassicaceae-specific phytocytokine (plant endogenous peptide released into the apoplast) perceived by MIK2 in a BAK1/SERK3 and SERK4 coreceptors-dependent manner, that modulates various physiological and antimicrobial processes including growth prevention and reactive oxygen species (ROS) response regulation. Inhibits root growth and regulates root meristems. Promotes ROS production and MAPK (e.g. MPK3, MPK4 and MPK6) activation in a MIK2-dependent manner, thus leading to the up-regulation of immune-related marker genes (e.g. WRKY30, WRKY33 and CYP81F2). The protein is Serine rich endogenous peptide 10 of Arabidopsis thaliana (Mouse-ear cress).